Here is a 1655-residue protein sequence, read N- to C-terminus: MATPSFGNSSPQLTFTHVANFMNDAAADVSAVDAKQLAQIRQFLKANKTNLIESLNTIRQNVTSSGDHNKLRSTIANLLQINVDNDPFFAQSEDLSHAVEFFMSERSSRLHIVYSLLVNPDIDLETYSFIDNDRFNVVGKLISIISSVIQNYDIITASSLAHDYNNDQDMFTIVSLVQLKKFSDLKFILQILQILNLMILNTKVPVDIVNQWFLQYQNQFVEFCRNINSTDKSIDTSSLQLYKFQNFQDLSYLSETLISRISSLFTITTILILGLNTSIAQFDIQSPLYMDTETFDTVNSALENDVATNIVNEDPIFHPMIHYSWSFILYYRRALQSSESFDDSDITKFALFAESHDVLQKLNTLSEILSFDPVYTTVITVFLEFSLNFIPITASTSRVFAKIISKAPEQFIENFLTNDTFEKKLSIIKAKLPLLNESLIPLINLALIDTEFANFELKDICSFAVTKSSLNDLDYDLIADTITNSSSSSDIIVPDLIELKSDLLVAPPLENENSNCLLSIPKSTKGKILTIKQQQQQQQQQNGQQPPTTSNLIIFLYKFNGWSLVGRILQNLLHSYMEKGTQLDDLQHELMISIIKLVTNVVDPKTSIEKSSEILSYLSNSLDTSASTINGASIIQVIFEIFEISLQRKDYTSIVQCCEFMTMLTPNYLHLVSSYLNKSDLLDKYGKTGLSNMILGSVELSTGDYTFTIQLLKLTKVFIRESLSLKNIHISKRSKIDIINKLILHAIHIFESYYNWKYNNFLQKFEIAFHLTLIFYDVLHDVFTINPHQKDQLIISSSANKLLQLFLTPMDSIDLAPNTLTNILISPLNTTTKILGDKILGNLYSKVMNNSFKLCTLLIAIRGSNRDLKPSNLEKLLFINSSKLVDVYTLPSYVHFKVQIIELLSYLVEAPWNDDYPFLLSFLGEAKSMAFLKEVLSDLSSPVQDWNLLRSLYIFFTTLLESKQDGLSILFLTGQFASNKKINDESSIDKKSSILTVLQKNSLLLDSTPEEVSCKLLETITYVLNTWTNSKIFIKDPKFVNSLLAKLKDSKKLFQKKENLTRDETVSLIKKYKLISRIVEIFALCIYNSTDSNSEILNFLNQEDLFELVHHFFQIDGFNKTFHDELNLKFKEKWPSLELQSFQKIPLSRINENENFGYDIPLLDIVLKADRSWNEPSKSQTNFKEEITDASLNLQYVNYEISTAKAWGALITTFVKRSTVPLNDGFVDLVEHFLKLNIDFGSDKQMFTQIYLERIELSFYILYSFKLSGKLLKEEKIIELMNKIFTIFKSGEIDFIKNIGKSLKNNFYRPLLRSVLVLLELVSSGDRFIELISDQLLEFFELVFSKGVYLILSEILCQINKCSTRGLSTDHTTQIVNLEDNTQDLLLLLSLFKKITNVNPSKNFNVILASSLNEVGTLKVILNLYSSAHLIRINDEPILGQITLTFISELCSIEPIAAKLINSGLYSVLLESPLSVAIQQGDIKPEFSPRLHNIWSNGLLSIVLLLLSQFGIKVLPETCLFVSYFGKQIKSTIYNWGDNKLAVSSSLIKETNQLVLLQKMLNLLNYQELFIQPKNSDDQQEAVELVIGLDSEHDKKRLSAALSKFLTHPKYLNSRIIPTTLEEQQQLEDESSRLEFVKGISRDIKALQDSLFKDV.

Positions 35–62 (KQLAQIRQFLKANKTNLIESLNTIRQNV) form a coiled coil. Positions 250–271 (LSYLSETLISRISSLFTITTIL) are leucine-zipper. At Ser-340 the chain carries Phosphoserine. A Glycyl lysine isopeptide (Lys-Gly) (interchain with G-Cter in ubiquitin) cross-link involves residue Lys-406.

This sequence belongs to the Nup188 family. As to quaternary structure, component of the nuclear pore complex (NPC). NPC constitutes the exclusive means of nucleocytoplasmic transport. NPCs allow the passive diffusion of ions and small molecules and the active, nuclear transport receptor-mediated bidirectional transport of macromolecules such as proteins, RNAs, ribonucleoparticles (RNPs), and ribosomal subunits across the nuclear envelope. Due to its 8-fold rotational symmetry, all subunits are present with 8 copies or multiples thereof. Interacts with POM152 and NIC96.

It localises to the nucleus. The protein resides in the nuclear pore complex. It is found in the nucleus membrane. Functionally, functions as a component of the nuclear pore complex (NPC). NPC components, collectively referred to as nucleoporins (NUPs), can play the role of both NPC structural components and of docking or interaction partners for transiently associated nuclear transport factors. NUP188 probably plays an important role in NPC assembly and organization. This is Nucleoporin NUP188 (NUP188) from Saccharomyces cerevisiae (strain ATCC 204508 / S288c) (Baker's yeast).